The primary structure comprises 50 residues: Basic phospholipase A2 Bmaj-9 (50 aa).

Positions 27, 29, and 31 each coordinate Ca(2+). C28 and C45 are oxidised to a cystine. H48 is an active-site residue. D49 provides a ligand contact to Ca(2+).

This sequence belongs to the phospholipase A2 family. Group II subfamily. D49 sub-subfamily. Ca(2+) is required as a cofactor. Expressed by the venom gland.

It is found in the secreted. The enzyme catalyses a 1,2-diacyl-sn-glycero-3-phosphocholine + H2O = a 1-acyl-sn-glycero-3-phosphocholine + a fatty acid + H(+). In terms of biological role, snake venom phospholipase A2 (PLA2) that causes irreversible neuromuscular blockade in chick biventer cervicis muscle preparations. The neuromuscular blockade is mediated by inhibitory action at the presynaptic motor nerve endings. PLA2 catalyzes the calcium-dependent hydrolysis of the 2-acyl groups in 3-sn-phosphoglycerides. This chain is Basic phospholipase A2 Bmaj-9, found in Bothrops marajoensis (Marajo lancehead).